Here is a 274-residue protein sequence, read N- to C-terminus: D-aminoacyl-tRNA deacylase (274 aa).

Belongs to the DtdA deacylase family. In terms of assembly, monomer. It depends on Zn(2+) as a cofactor.

It carries out the reaction a D-aminoacyl-tRNA + H2O = a tRNA + a D-alpha-amino acid + H(+). The catalysed reaction is glycyl-tRNA(Ala) + H2O = tRNA(Ala) + glycine + H(+). Functionally, D-aminoacyl-tRNA deacylase with broad substrate specificity. By recycling D-aminoacyl-tRNA to D-amino acids and free tRNA molecules, this enzyme counteracts the toxicity associated with the formation of D-aminoacyl-tRNA entities in vivo. The polypeptide is D-aminoacyl-tRNA deacylase (Pyrococcus horikoshii (strain ATCC 700860 / DSM 12428 / JCM 9974 / NBRC 100139 / OT-3)).